Here is a 159-residue protein sequence, read N- to C-terminus: Transcription antitermination protein NusB (159 aa).

Belongs to the NusB family.

Functionally, involved in transcription antitermination. Required for transcription of ribosomal RNA (rRNA) genes. Binds specifically to the boxA antiterminator sequence of the ribosomal RNA (rrn) operons. The sequence is that of Transcription antitermination protein NusB from Xanthomonas axonopodis pv. citri (strain 306).